A 516-amino-acid chain; its full sequence is Chromosomal replication initiator protein DnaA (516 aa).

Positions 1–72 (MSLEHWNLCL…LLSEFAGDDL (72 aa)) are domain I, interacts with DnaA modulators. A domain II region spans residues 72 to 179 (LAPALKLAVK…QVEGGINHGA (108 aa)). Positions 180 to 396 (NLNNSFTFDN…GALKRVIANS (217 aa)) are domain III, AAA+ region. G224, G226, K227, and T228 together coordinate ATP. The segment at 397-516 (HFTGRAITPD…YKQLMRILTT (120 aa)) is domain IV, binds dsDNA.

This sequence belongs to the DnaA family. Oligomerizes as a right-handed, spiral filament on DNA at oriC.

It localises to the cytoplasm. Functionally, plays an essential role in the initiation and regulation of chromosomal replication. ATP-DnaA binds to the origin of replication (oriC) to initiate formation of the DNA replication initiation complex once per cell cycle. Binds the DnaA box (a 9 base pair repeat at the origin) and separates the double-stranded (ds)DNA. Forms a right-handed helical filament on oriC DNA; dsDNA binds to the exterior of the filament while single-stranded (ss)DNA is stabiized in the filament's interior. The ATP-DnaA-oriC complex binds and stabilizes one strand of the AT-rich DNA unwinding element (DUE), permitting loading of DNA polymerase. After initiation quickly degrades to an ADP-DnaA complex that is not apt for DNA replication. Binds acidic phospholipids. This Marinomonas sp. (strain MWYL1) protein is Chromosomal replication initiator protein DnaA.